The primary structure comprises 284 residues: Bifunctional protein FolD (284 aa).

Residues 166-168 (GAS) and isoleucine 232 contribute to the NADP(+) site.

The protein belongs to the tetrahydrofolate dehydrogenase/cyclohydrolase family. As to quaternary structure, homodimer.

It catalyses the reaction (6R)-5,10-methylene-5,6,7,8-tetrahydrofolate + NADP(+) = (6R)-5,10-methenyltetrahydrofolate + NADPH. It carries out the reaction (6R)-5,10-methenyltetrahydrofolate + H2O = (6R)-10-formyltetrahydrofolate + H(+). The protein operates within one-carbon metabolism; tetrahydrofolate interconversion. Functionally, catalyzes the oxidation of 5,10-methylenetetrahydrofolate to 5,10-methenyltetrahydrofolate and then the hydrolysis of 5,10-methenyltetrahydrofolate to 10-formyltetrahydrofolate. In Tolumonas auensis (strain DSM 9187 / NBRC 110442 / TA 4), this protein is Bifunctional protein FolD.